Consider the following 445-residue polypeptide: UPF0210 protein SZO_15840 (445 aa).

This sequence belongs to the UPF0210 family. As to quaternary structure, homodimer.

This chain is UPF0210 protein SZO_15840, found in Streptococcus equi subsp. zooepidemicus (strain H70).